Here is a 341-residue protein sequence, read N- to C-terminus: UDP-3-O-acylglucosamine N-acyltransferase (341 aa).

The active-site Proton acceptor is histidine 241.

It belongs to the transferase hexapeptide repeat family. LpxD subfamily. In terms of assembly, homotrimer.

It catalyses the reaction a UDP-3-O-[(3R)-3-hydroxyacyl]-alpha-D-glucosamine + a (3R)-hydroxyacyl-[ACP] = a UDP-2-N,3-O-bis[(3R)-3-hydroxyacyl]-alpha-D-glucosamine + holo-[ACP] + H(+). It participates in bacterial outer membrane biogenesis; LPS lipid A biosynthesis. In terms of biological role, catalyzes the N-acylation of UDP-3-O-acylglucosamine using 3-hydroxyacyl-ACP as the acyl donor. Is involved in the biosynthesis of lipid A, a phosphorylated glycolipid that anchors the lipopolysaccharide to the outer membrane of the cell. In Saccharophagus degradans (strain 2-40 / ATCC 43961 / DSM 17024), this protein is UDP-3-O-acylglucosamine N-acyltransferase.